A 480-amino-acid polypeptide reads, in one-letter code: Cyclin L homolog cyl-1 (480 aa).

The segment at 25–58 (PKEQNGNVEPKKEEDEKFESTYKQNENTQITPSS) is disordered. The segment covering 33–44 (EPKKEEDEKFES) has biased composition (basic and acidic residues). Residues 45 to 58 (TYKQNENTQITPSS) are compositionally biased toward polar residues. One can recognise a Cyclin N-terminal domain in the interval 91 to 230 (PSLVDGLSKE…RRILATLGFV (140 aa)). The disordered stretch occupies residues 368–480 (KMAPDGEKST…ESSTPPRSRR (113 aa)). Basic and acidic residues-rich tracts occupy residues 384 to 409 (KDSR…GKKE) and 418 to 442 (NDRD…DEKK). Positions 443–453 (DRRKRTRSRSR) are enriched in basic residues. Residues 454 to 472 (DRKDKNRNRDVGKRYRKES) show a composition bias toward basic and acidic residues.

It belongs to the cyclin family.

Its function is as follows. Involved in pre-mRNA splicing. Functions in association with cyclin-dependent kinases (CDKs). Involved in induction of expression of heat shock protein hsp-16.2 in response to heat shock. Plays a role in male tail development, perhaps acting together with cell cycle regulators cdc-25.2, cdk-1, cyb-3, and cyd-1. In Caenorhabditis elegans, this protein is Cyclin L homolog cyl-1.